The primary structure comprises 402 residues: Enoyl-[acyl-carrier-protein] reductase [NADH] (402 aa).

NAD(+) is bound by residues 48–53, 74–75, 111–112, and 140–141; these read GASSGY, FE, DA, and LA. Y226 serves as a coordination point for substrate. Residue Y236 is the Proton donor of the active site. NAD(+) is bound by residues K245 and 274–276; that span reads VVT.

It belongs to the TER reductase family. As to quaternary structure, monomer.

It catalyses the reaction a 2,3-saturated acyl-[ACP] + NAD(+) = a (2E)-enoyl-[ACP] + NADH + H(+). It carries out the reaction a 2,3-saturated acyl-CoA + NAD(+) = a (2E)-enoyl-CoA + NADH + H(+). It functions in the pathway lipid metabolism; fatty acid biosynthesis. Involved in the final reduction of the elongation cycle of fatty acid synthesis (FAS II). Catalyzes the reduction of a carbon-carbon double bond in an enoyl moiety that is covalently linked to an acyl carrier protein (ACP). It can also use crotonyl-CoA. The sequence is that of Enoyl-[acyl-carrier-protein] reductase [NADH] from Xanthomonas oryzae pv. oryzae (strain MAFF 311018).